Consider the following 79-residue polypeptide: MKLTCVLIISVLFLTASQLITAVYSRDKQQYRAARLRDEMRNLKGARDCGEQGQGCYTRPCCPGLECRGGGTGGGVCQQ.

Residues 1–22 form the signal peptide; the sequence is MKLTCVLIISVLFLTASQLITA. A propeptide spanning residues 23–47 is cleaved from the precursor; sequence VYSRDKQQYRAARLRDEMRNLKGAR. 3 cysteine pairs are disulfide-bonded: Cys49/Cys62, Cys56/Cys67, and Cys61/Cys77. Pro60 and Pro63 each carry 4-hydroxyproline.

This sequence belongs to the conotoxin O1 superfamily. Expressed by the venom duct.

It localises to the secreted. Ion channel inhibitor that inhibits the increase in intracellular calcium upon depolarization in DRG neurons. In vivo, both intraperitoneal and intracranial injections into mice induce hyperactivity. The polypeptide is Conotoxin Tr6.2 (Conus terebra (Sea snail)).